A 292-amino-acid polypeptide reads, in one-letter code: Elongation factor Ts (292 aa).

The interval 80 to 83 (TDFV) is involved in Mg(2+) ion dislocation from EF-Tu.

The protein belongs to the EF-Ts family.

The protein resides in the cytoplasm. Functionally, associates with the EF-Tu.GDP complex and induces the exchange of GDP to GTP. It remains bound to the aminoacyl-tRNA.EF-Tu.GTP complex up to the GTP hydrolysis stage on the ribosome. The protein is Elongation factor Ts of Cupriavidus pinatubonensis (strain JMP 134 / LMG 1197) (Cupriavidus necator (strain JMP 134)).